Reading from the N-terminus, the 398-residue chain is Sphingosine 1-phosphate receptor 5 (398 aa).

Residues 1 to 40 are Extracellular-facing; it reads MEPGLLRPAPVSEVIVLHYNYTGKLRGARYQPGAGLRADA. The N-linked (GlcNAc...) asparagine glycan is linked to asparagine 20. Residues 41–61 traverse the membrane as a helical segment; the sequence is VVCLAVCALIVLENLAVLVVL. The Cytoplasmic portion of the chain corresponds to 62–70; that stretch reads GRHPRFHAP. A helical transmembrane segment spans residues 71-91; it reads MFLLLGSLTLSDLLAGAAYAA. The Extracellular segment spans residues 92–111; that stretch reads NILLSGPLTLRLSPALWFAR. Residues 112 to 132 traverse the membrane as a helical segment; sequence EGGVFVALAASVLSLLAIALE. Over 133-151 the chain is Cytoplasmic; it reads RLLTMERRGPAPAARRGRT. Residues 152–172 form a helical membrane-spanning segment; that stretch reads LALAAGAWGVSLLLGLLPALG. The Extracellular portion of the chain corresponds to 173-191; sequence WNCLGRLEACSTVLPLYAK. The chain crosses the membrane as a helical span at residues 192-212; that stretch reads AYVLFCVLAFVGILAAICGLY. At 213-252 the chain is on the cytoplasmic side; it reads ARIYCQVRAKAQRLRARPGAGEGTSARARGTPRSLALLRT. A helical membrane pass occupies residues 253–273; it reads LSVVLVAFVACWGPLFLLLLL. Residues 274-287 are Extracellular-facing; that stretch reads DVACPARACPVLLQ. Residues 288 to 308 form a helical membrane-spanning segment; sequence ADPFLGLAMANSLLNPIIYTF. Residues 309–398 lie on the Cytoplasmic side of the membrane; that stretch reads TNRDLRHALL…QTLVPPPAAD (90 aa). Cysteine 323 is lipidated: S-palmitoyl cysteine. The segment at 332-398 is disordered; the sequence is SGTSRSPGST…QTLVPPPAAD (67 aa). Low complexity predominate over residues 334–343; the sequence is TSRSPGSTLG. Residue serine 337 is modified to Phosphoserine. A compositionally biased stretch (basic and acidic residues) spans 359-373; the sequence is SSSRSERSSPQRDGL. Residue serine 381 is modified to Phosphoserine.

This sequence belongs to the G-protein coupled receptor 1 family.

The protein resides in the cell membrane. In terms of biological role, receptor for the lysosphingolipid sphingosine 1-phosphate (S1P). S1P is a bioactive lysophospholipid that elicits diverse physiological effect on most types of cells and tissues. Is coupled to both the G(i/O)alpha and G(12) subclass of heteromeric G-proteins. The chain is Sphingosine 1-phosphate receptor 5 (S1PR5) from Sus scrofa (Pig).